The primary structure comprises 158 residues: Pyruvoyl-dependent arginine decarboxylase (158 aa).

Ser-44 carries the post-translational modification Pyruvic acid (Ser).

It belongs to the PdaD family. The cofactor is pyruvate.

The enzyme catalyses L-arginine + H(+) = agmatine + CO2. This is Pyruvoyl-dependent arginine decarboxylase from Pyrococcus abyssi (strain GE5 / Orsay).